The sequence spans 511 residues: Probable cytochrome P450 4d21 (511 aa).

Cys456 lines the heme pocket.

Belongs to the cytochrome P450 family. Heme serves as cofactor.

It localises to the endoplasmic reticulum membrane. It is found in the microsome membrane. Its function is as follows. May be involved in the metabolism of insect hormones and in the breakdown of synthetic insecticides. This Drosophila melanogaster (Fruit fly) protein is Probable cytochrome P450 4d21 (Cyp4d21).